Here is a 547-residue protein sequence, read N- to C-terminus: Tripartite motif-containing protein 5 (547 aa).

Ala2 is modified (N-acetylalanine). The RING-type zinc finger occupies 15–59 (CPICLDLLTEPLSLDCGHSFCQACITADHKESTLHQGERSCPLCR). Phosphoserine is present on Ser86. The B box-type zinc finger occupies 91-132 (QKVDRCARHGEKLLLFCQQHGNVICWLCERSQEHRGHSTFLV). Zn(2+)-binding residues include Cys96, His99, Cys118, and His124. A coiled-coil region spans residues 132-224 (VEEVAQKYRE…LAQSENDMVL (93 aa)). The required for interaction with GABARAP and for autophagy stretch occupies residues 186-199 (FKQLRDILDCEESN). The region spanning 280 to 547 (PNLKGMLQVF…LPMTLCSPSS (268 aa)) is the B30.2/SPRY domain.

The protein belongs to the TRIM/RBCC family. Can form homodimers and homotrimers. In addition to lower-order dimerization, also exhibits a higher-order multimerization and both low- and high-order multimerizations are essential for its restriction activity. Interacts with BTBD1 and BTBD2. Interacts with PSMC4, PSMC5, PSMD7 and HSPA8/HSC70. Interacts (via B30.2/SPRY domain) with HSPA1A/B. Interacts with PSMC2, MAP3K7/TAK1, TAB2 and TAB3. Interacts with SQSTM1. Interacts with TRIM6 and TRIM34. Interacts with ULK1 (phosphorylated form), GABARAP, GABARAPL1, GABARAPL2, MAP1LC3A, MAP1LC3C and BECN1. Degraded in a proteasome-independent fashion in the absence of viral infection but in a proteasome-dependent fashion following exposure to restriction sensitive virus. Post-translationally, autoubiquitinated in a RING finger- and UBE2D2-dependent manner. Monoubiquitinated by TRIM21. Deubiquitinated by Yersinia YopJ. Ubiquitination may not lead to proteasomal degradation.

It is found in the cytoplasm. The protein resides in the nucleus. It catalyses the reaction S-ubiquitinyl-[E2 ubiquitin-conjugating enzyme]-L-cysteine + [acceptor protein]-L-lysine = [E2 ubiquitin-conjugating enzyme]-L-cysteine + N(6)-ubiquitinyl-[acceptor protein]-L-lysine.. Its pathway is protein modification; protein ubiquitination. Functionally, capsid-specific restriction factor that prevents infection from non-host-adapted retroviruses. Blocks viral replication early in the life cycle, after viral entry but before reverse transcription. In addition to acting as a capsid-specific restriction factor, also acts as a pattern recognition receptor that activates innate immune signaling in response to the retroviral capsid lattice. Binding to the viral capsid triggers its E3 ubiquitin ligase activity, and in concert with the heterodimeric ubiquitin conjugating enzyme complex UBE2V1-UBE2N (also known as UBC13-UEV1A complex) generates 'Lys-63'-linked polyubiquitin chains, which in turn are catalysts in the autophosphorylation of the MAP3K7/TAK1 complex (includes TAK1, TAB2, and TAB3). Activation of the MAP3K7/TAK1 complex by autophosphorylation results in the induction and expression of NF-kappa-B and MAPK-responsive inflammatory genes, thereby leading to an innate immune response in the infected cell. Plays a role in regulating autophagy through activation of autophagy regulator BECN1 by causing its dissociation from its inhibitors BCL2 and TAB2. The protein is Tripartite motif-containing protein 5 (TRIM5) of Lagothrix lagotricha (Brown woolly monkey).